A 404-amino-acid chain; its full sequence is GID complex subunit 9 (404 aa).

A LisH domain is found at 116–148 (SRVRLNRLVADYMMANGYHGAAALLCKDSQLEN). In terms of domain architecture, CTLH spans 154–211 (IYKRYQLIHDSILQQELKEVLSWCSEHRAILKKNNSTLELEVRLQRFIELIKSKKLCQ). The RING-Gid-type zinc finger occupies 317 to 389 (CPVCTPCLND…REGFLRDPYS (73 aa)).

The protein belongs to the FYV10 family. Identified in the GID/CTLH complex. In the absence of stress, the complex exists as an inactive anticipatory complex (GID(Ant)), composed of Gid1, the E3 ubiquitin-ligase Gid2, Gid5, Gid8, and the RING-like subunit Gid9, awaiting a substrate receptor to form the active E3 ligase complex. When cells are shifted to glucose-containing medium, the substrate receptor Gid4 is induced and becomes part of the complex, named GID(SR4). Additionally, Gid7 transforms the GID(SR4) E3 ligase core into a higher-order supramolecular assembly (Chelator-GID(SR4)). Under osmotic or heat stress, the substrate receptor Gid10 is induced and becomes part of the complex, named GID(SR10).

The protein localises to the cytoplasm. It localises to the nucleus. The catalysed reaction is S-ubiquitinyl-[E2 ubiquitin-conjugating enzyme]-L-cysteine + [acceptor protein]-L-lysine = [E2 ubiquitin-conjugating enzyme]-L-cysteine + N(6)-ubiquitinyl-[acceptor protein]-L-lysine.. The protein operates within protein modification; protein ubiquitination. Its function is as follows. Component of the GID E3 ligase complex recruiting N termini and catalyzing ubiquitination of proteins targeted for degradation. GID E3 is regulated through assembly with interchangeable N-degron-binding substrate receptors induced by distinct environmental perturbations. Required for the adaptation to the presence of glucose in the growth medium; mediates in association with the substrate receptor VID24/GID4 the degradation of enzymes involved in gluconeogenesis when cells are shifted to glucose-containing medium. The polypeptide is GID complex subunit 9 (gid9) (Schizosaccharomyces pombe (strain 972 / ATCC 24843) (Fission yeast)).